A 420-amino-acid chain; its full sequence is UDP-N-acetylglucosamine 1-carboxyvinyltransferase 2 (420 aa).

A phosphoenolpyruvate-binding site is contributed by 22–23 (KN). Residue arginine 92 participates in UDP-N-acetyl-alpha-D-glucosamine binding. Cysteine 116 acts as the Proton donor in catalysis. Cysteine 116 carries the post-translational modification 2-(S-cysteinyl)pyruvic acid O-phosphothioketal. UDP-N-acetyl-alpha-D-glucosamine contacts are provided by residues 121–125 (RPIDL), aspartate 307, and isoleucine 329.

Belongs to the EPSP synthase family. MurA subfamily.

The protein localises to the cytoplasm. It carries out the reaction phosphoenolpyruvate + UDP-N-acetyl-alpha-D-glucosamine = UDP-N-acetyl-3-O-(1-carboxyvinyl)-alpha-D-glucosamine + phosphate. It participates in cell wall biogenesis; peptidoglycan biosynthesis. Functionally, cell wall formation. Adds enolpyruvyl to UDP-N-acetylglucosamine. In Streptococcus thermophilus (strain ATCC BAA-250 / LMG 18311), this protein is UDP-N-acetylglucosamine 1-carboxyvinyltransferase 2.